A 373-amino-acid polypeptide reads, in one-letter code: XK-related protein 9 (373 aa).

The next 8 helical transmembrane spans lie at 8-28 (FMMS…DIVL), 38-58 (YVLG…VHCF), 166-186 (MVIM…QIAL), 206-226 (LFYK…LLFV), 230-250 (VALL…FINH), 256-276 (SVSM…FTFF), 295-315 (VLGT…IFNS), and 318-338 (FIPI…FLGV).

The protein belongs to the XK family. Undergoes proteolytic processing by caspase-3 (CASP3), caspase-6 (CASP6) and caspase-7 (CASP7) to generate the XK-related protein 9, processed form, leading to its activation. In terms of tissue distribution, highly expressed in the small intestines; weakly expressed in the pancreas, liver, stomach, and large intestines.

It is found in the cell membrane. The catalysed reaction is a 1,2-diacyl-sn-glycero-3-phospho-L-serine(in) = a 1,2-diacyl-sn-glycero-3-phospho-L-serine(out). Its activity is regulated as follows. Activated upon caspase cleavage to generate the XK-related protein 9, processed form. Does not act prior the onset of apoptosis. Phospholipid scramblase that promotes phosphatidylserine exposure on apoptotic cell surface. Phosphatidylserine is a specific marker only present at the surface of apoptotic cells and acts as a specific signal for engulfment. This Mus musculus (Mouse) protein is XK-related protein 9.